The sequence spans 146 residues: Hemoglobin subunit beta (146 aa).

Residues 2–146 enclose the Globin domain; that stretch reads QWSESERTII…VVSALGKQYH (145 aa). Residues histidine 63 and histidine 92 each contribute to the heme b site.

The protein belongs to the globin family. Heterotetramer of two alpha chains and two beta chains. Red blood cells.

Functionally, involved in oxygen transport from gills to the various peripheral tissues. The protein is Hemoglobin subunit beta (hbb) of Pogonophryne scotti (Saddleback plunderfish).